We begin with the raw amino-acid sequence, 589 residues long: Probable translation initiation factor IF-2 (589 aa).

One can recognise a tr-type G domain in the interval 5–219; that stretch reads IRTPIVCVLG…IMIGLAQRYL (215 aa). Positions 14 to 21 are G1; sequence GHVDHGKT. GTP is bound at residue 14–21; that stretch reads GHVDHGKT. Residues 39-43 form a G2 region; sequence AITQH. Positions 75 to 78 are G3; it reads DTPG. Residues 75–79 and 129–132 each bind GTP; these read DTPGH and TKLD. A G4 region spans residues 129-132; sequence TKLD. The segment at 197-199 is G5; it reads SSM.

The protein belongs to the TRAFAC class translation factor GTPase superfamily. Classic translation factor GTPase family. IF-2 subfamily.

Functionally, function in general translation initiation by promoting the binding of the formylmethionine-tRNA to ribosomes. Seems to function along with eIF-2. The polypeptide is Probable translation initiation factor IF-2 (Methanocorpusculum labreanum (strain ATCC 43576 / DSM 4855 / Z)).